The following is an 82-amino-acid chain: MVFLLCFFLVADVSYGINGDCELPKVVGPCRASHPRYYYNSSSKRCEKFNYGGCRGNANNFHTLEECEKVCGVRSRDSPKEN.

Residues 1–16 form the signal peptide; it reads MVFLLCFFLVADVSYG. Positions 21 to 71 constitute a BPTI/Kunitz inhibitor domain; the sequence is CELPKVVGPCRASHPRYYYNSSSKRCEKFNYGGCRGNANNFHTLEECEKVC. Disulfide bonds link Cys21/Cys71, Cys30/Cys54, and Cys46/Cys67. Positions 76–82 are excised as a propeptide; that stretch reads RDSPKEN.

The protein belongs to the venom Kunitz-type family. Sea anemone type 2 potassium channel toxin subfamily.

The protein resides in the secreted. The protein localises to the nematocyst. Its function is as follows. Serine protease inhibitor that inhibits both tissue and plasma kallikreins. Has hemolytic activity. Inhibits voltage-gated potassium channels (Kv). This Anemonia viridis (Snakelocks anemone) protein is U-actitoxin-Avd3p.